A 477-amino-acid polypeptide reads, in one-letter code: Small ribosomal subunit protein uS5m (477 aa).

This sequence belongs to the universal ribosomal protein uS5 family. Component of the mitochondrial small ribosomal subunit (mt-SSU). Mature N.crassa 74S mitochondrial ribosomes consist of a small (37S) and a large (54S) subunit. The 37S small subunit contains a 16S ribosomal RNA (16S mt-rRNA) and 32 different proteins. The 54S large subunit contains a 23S rRNA (23S mt-rRNA) and 42 different proteins. uS3m, uS4m and uS5m form the narrow entry site of the mRNA channel.

Its subcellular location is the mitochondrion. Its function is as follows. Component of the mitochondrial ribosome (mitoribosome), a dedicated translation machinery responsible for the synthesis of mitochondrial genome-encoded proteins, including at least some of the essential transmembrane subunits of the mitochondrial respiratory chain. The mitoribosomes are attached to the mitochondrial inner membrane and translation products are cotranslationally integrated into the membrane. The sequence is that of Small ribosomal subunit protein uS5m (mrps5) from Neurospora crassa (strain ATCC 24698 / 74-OR23-1A / CBS 708.71 / DSM 1257 / FGSC 987).